The sequence spans 204 residues: 3-dehydroquinate dehydratase (204 aa).

3-dehydroquinate is bound by residues Ser-9, 30 to 32 (ELR), and Arg-57. His-108 (proton donor/acceptor) is an active-site residue. Lys-133 (schiff-base intermediate with substrate) is an active-site residue. Residues Arg-167, Thr-186, and Gln-190 each coordinate 3-dehydroquinate.

Belongs to the type-I 3-dehydroquinase family. Homodimer.

It catalyses the reaction 3-dehydroquinate = 3-dehydroshikimate + H2O. The protein operates within metabolic intermediate biosynthesis; chorismate biosynthesis; chorismate from D-erythrose 4-phosphate and phosphoenolpyruvate: step 3/7. Functionally, involved in the third step of the chorismate pathway, which leads to the biosynthesis of aromatic amino acids. Catalyzes the cis-dehydration of 3-dehydroquinate (DHQ) and introduces the first double bond of the aromatic ring to yield 3-dehydroshikimate. The sequence is that of 3-dehydroquinate dehydratase from Metallosphaera sedula (strain ATCC 51363 / DSM 5348 / JCM 9185 / NBRC 15509 / TH2).